Here is a 119-residue protein sequence, read N- to C-terminus: Large ribosomal subunit protein bL20 (119 aa).

This sequence belongs to the bacterial ribosomal protein bL20 family.

Binds directly to 23S ribosomal RNA and is necessary for the in vitro assembly process of the 50S ribosomal subunit. It is not involved in the protein synthesizing functions of that subunit. The sequence is that of Large ribosomal subunit protein bL20 from Anoxybacillus flavithermus (strain DSM 21510 / WK1).